The chain runs to 341 residues: Methionine import ATP-binding protein MetN (341 aa).

Residues 2–241 (IELNQVVKRY…PQHEVTRRFV (240 aa)) enclose the ABC transporter domain. 38 to 45 (GFSGAGKS) provides a ligand contact to ATP.

It belongs to the ABC transporter superfamily. Methionine importer (TC 3.A.1.24) family. As to quaternary structure, the complex is composed of two ATP-binding proteins (MetN), two transmembrane proteins (MetI) and a solute-binding protein (MetQ).

It localises to the cell membrane. The enzyme catalyses L-methionine(out) + ATP + H2O = L-methionine(in) + ADP + phosphate + H(+). The catalysed reaction is D-methionine(out) + ATP + H2O = D-methionine(in) + ADP + phosphate + H(+). In terms of biological role, part of the ABC transporter complex MetNIQ involved in methionine import. Responsible for energy coupling to the transport system. This chain is Methionine import ATP-binding protein MetN, found in Staphylococcus haemolyticus (strain JCSC1435).